Consider the following 208-residue polypeptide: Protein GrpE (208 aa).

Basic and acidic residues predominate over residues 1 to 12 (MTNKDESVEKNT). Residues 1 to 51 (MTNKDESVEKNTESTVEETNVKQNIDDSVEQAEESKGHLQDEAIEETSDEN) are disordered. The span at 13-23 (ESTVEETNVKQ) shows a compositional bias: polar residues. A compositionally biased stretch (acidic residues) spans 42-51 (EAIEETSDEN).

This sequence belongs to the GrpE family. As to quaternary structure, homodimer.

Its subcellular location is the cytoplasm. In terms of biological role, participates actively in the response to hyperosmotic and heat shock by preventing the aggregation of stress-denatured proteins, in association with DnaK and GrpE. It is the nucleotide exchange factor for DnaK and may function as a thermosensor. Unfolded proteins bind initially to DnaJ; upon interaction with the DnaJ-bound protein, DnaK hydrolyzes its bound ATP, resulting in the formation of a stable complex. GrpE releases ADP from DnaK; ATP binding to DnaK triggers the release of the substrate protein, thus completing the reaction cycle. Several rounds of ATP-dependent interactions between DnaJ, DnaK and GrpE are required for fully efficient folding. The chain is Protein GrpE from Staphylococcus aureus (strain USA300).